The chain runs to 504 residues: Transcriptional coactivator YAP1 (504 aa).

Composition is skewed to pro residues over residues 1 to 12 and 20 to 36; these read MDPGQQPPPQPA and PSQP…PGQP. Residues 1–59 are disordered; it reads MDPGQQPPPQPAPQGQGQPPSQPPQGQGPPSGPGQPAPAATQAAPQAPPAGHQIVHVRG. Residues 37–51 are compositionally biased toward low complexity; the sequence is APAATQAAPQAPPAG. A Phosphoserine; by LATS1 and LATS2 modification is found at S61. Residue T63 is modified to Phosphothreonine. The stretch at 86–100 forms a coiled coil; that stretch reads MRLRKLPDSFFKPPE. Position 90 is an N6-lactoyllysine (K90). The tract at residues 91–114 is disordered; that stretch reads LPDSFFKPPEPKSHSRQASTDAGT. S105 bears the Phosphoserine mark. At S109 the chain carries Phosphoserine; by LATS1 and LATS2. Position 110 is a phosphothreonine (T110). T119 is subject to Phosphothreonine; by MAPK8 and MAPK9. A Phosphoserine; by LATS1 and LATS2 modification is found at S127. A phosphoserine mark is found at S128 and S131. The tract at residues 133–158 is disordered; it reads QLGAVSPGTLTPTGVVSGPAATPTAQ. S138 carries the post-translational modification Phosphoserine; by MAPK8 and MAPK9. T154 carries the phosphothreonine; by MAPK8 and MAPK9 modification. S164 carries the phosphoserine; by LATS1 and LATS2 modification. 2 WW domains span residues 171–204 and 230–263; these read VPLP…DPRK and GPLP…DPRL. Phosphoserine occurs at positions 274 and 289. Disordered regions lie at residues 275 to 309 and 355 to 407; these read QSAP…MRLQ and LEQD…MSSY. Residues 291 to 504 form a transactivation domain region; the sequence is QGGVMGGSNS…LDKESFLTWL (214 aa). Residues 298–359 adopt a coiled-coil conformation; the sequence is SNSNQQQQMR…SQLPTLEQDG (62 aa). The span at 355-391 shows a compositional bias: polar residues; that stretch reads LEQDGGTQNPVSSPGMSQELRTMTTNSSDPFLNSGTY. S367 carries the post-translational modification Phosphoserine; by MAPK8 and MAPK9. 4 positions are modified to phosphoserine: S371, S381, S382, and S388. Residue S397 is modified to Phosphoserine; by LATS1 and LATS2. 2 positions are modified to phosphoserine; by CK1: S400 and S403. Y407 carries the post-translational modification Phosphotyrosine; by ABL1. A Phosphothreonine; by MAPK8 and MAPK9 modification is found at T412.

The protein belongs to the YAP1 family. As to quaternary structure, part of a complex when phosphorylated that contains DSG3, PKP1, YAP1 and YWHAG; the complex is required for localization of DSG3 and YAP1 to the cell membrane in keratinocytes. Binds to the SH3 domain of the YES kinase. Binds to WBP1 and WBP2. Binds, in vitro, through the WW1 domain, to neural isoforms of ENAH that contain the PPSY motif. The phosphorylated form interacts with YWHAB. Interacts (via WW domains) with LATS1 (via PPxY motif 2). Interacts with LATS2. Interacts with TEAD1, TEAD2, TEAD3 and TEAD4. Interacts with TP73. Interacts with RUNX1. Interacts with HCK. Interacts (via WW domains) with PTPN14 (via PPxY motif 2); this interaction leads to the cytoplasmic sequestration of YAP1 and inhibits its transcriptional coactivator activity. Interacts (when phosphorylated at Ser-127) with SMAD2, SMAD3 and WWTR1. Interacts with PRRG2 (via cytoplasmic domain). Interacts (via WW domains) with PRRG4 (via cytoplasmic domain). Interacts (phosphorylated) with CLDN18; the interaction sequesters YAP1 away from the nucleus and thereby restricts transcription of YAP1 target genes. Interacts with SMAD1. Interacts with AMOTL2, the interaction is required for ubiquitination of AMOTL2 and localization of YAP1 to tight junctions. Interacts with AMOT isoform 1; the interaction facilitates translocation of YAP1 to the cytoplasm and tight junctions. In terms of assembly, interacts (via WW domain 1) with isoform 3 of ERBB4 (via PPxY motif 2). Phosphorylated by LATS1 and LATS2; leading to cytoplasmic translocation and inactivation. Phosphorylated by ABL1; leading to YAP1 stabilization, enhanced interaction with TP73 and recruitment onto proapoptotic genes; in response to DNA damage. Phosphorylation at Ser-400 and Ser-403 by CK1 is triggered by previous phosphorylation at Ser-397 by LATS proteins and leads to YAP1 ubiquitination by SCF(beta-TRCP) E3 ubiquitin ligase and subsequent degradation. Phosphorylated at Thr-119, Ser-138, Thr-154, Ser-367 and Thr-412 by MAPK8/JNK1 and MAPK9/JNK2, which is required for the regulation of apoptosis by YAP1. Phosphorylated in the nucleus by PRP4K; phosphorylation leads to nuclear exclusion. In terms of processing, lactylation by AARS1 promotes nuclear localization and stabilization of YAP1, leading to increased Hippo signaling pathway. Delactylated by SIRT1. Post-translationally, ubiquitinated by SCF(beta-TRCP) E3 ubiquitin ligase. As to expression, increased expression seen in some liver and prostate cancers. Isoforms lacking the transactivation domain found in striatal neurons of patients with Huntington disease (at protein level).

The protein localises to the cytoplasm. It localises to the nucleus. It is found in the cell junction. The protein resides in the tight junction. Its subcellular location is the cell membrane. In terms of biological role, transcriptional regulator with dual roles as a coactivator and corepressor. Critical downstream regulatory target in the Hippo signaling pathway, crucial for organ size control and tumor suppression by restricting proliferation and promoting apoptosis. The Hippo signaling pathway core involves a kinase cascade featuring STK3/MST2 and STK4/MST1, along with its regulatory partner SAV1, which phosphorylates and activates LATS1/2 in complex with their regulatory protein, MOB1. This activation leads to the phosphorylation and inactivation of the YAP1 oncoprotein and WWTR1/TAZ. Phosphorylation of YAP1 by LATS1/2 prevents its nuclear translocation, thereby regulating the expression of its target genes. The transcriptional regulation of gene expression requires TEAD transcription factors and modulates cell growth, anchorage-independent growth, and induction of epithelial-mesenchymal transition (EMT). Plays a key role in tissue tension and 3D tissue shape by regulating the cortical actomyosin network, acting via ARHGAP18, a Rho GTPase activating protein that suppresses F-actin polymerization. It also suppresses ciliogenesis by acting as a transcriptional corepressor of TEAD4 target genes AURKA and PLK1. In conjunction with WWTR1, regulates TGFB1-dependent SMAD2 and SMAD3 nuclear accumulation. Synergizes with WBP2 to enhance PGR activity. Functionally, activates the C-terminal fragment (CTF) of ERBB4 (isoform 3). The sequence is that of Transcriptional coactivator YAP1 from Homo sapiens (Human).